Here is a 167-residue protein sequence, read N- to C-terminus: 6,7-dimethyl-8-ribityllumazine synthase (167 aa).

Residues F26, 60–62 (AFE), and 89–91 (AVI) each bind 5-amino-6-(D-ribitylamino)uracil. 94 to 95 (ET) provides a ligand contact to (2S)-2-hydroxy-3-oxobutyl phosphate. H97 acts as the Proton donor in catalysis. A 5-amino-6-(D-ribitylamino)uracil-binding site is contributed by F122. R136 contacts (2S)-2-hydroxy-3-oxobutyl phosphate.

It belongs to the DMRL synthase family. As to quaternary structure, forms an icosahedral capsid composed of 60 subunits, arranged as a dodecamer of pentamers.

The enzyme catalyses (2S)-2-hydroxy-3-oxobutyl phosphate + 5-amino-6-(D-ribitylamino)uracil = 6,7-dimethyl-8-(1-D-ribityl)lumazine + phosphate + 2 H2O + H(+). It functions in the pathway cofactor biosynthesis; riboflavin biosynthesis; riboflavin from 2-hydroxy-3-oxobutyl phosphate and 5-amino-6-(D-ribitylamino)uracil: step 1/2. Functionally, catalyzes the formation of 6,7-dimethyl-8-ribityllumazine by condensation of 5-amino-6-(D-ribitylamino)uracil with 3,4-dihydroxy-2-butanone 4-phosphate. This is the penultimate step in the biosynthesis of riboflavin. The protein is 6,7-dimethyl-8-ribityllumazine synthase of Vesicomyosocius okutanii subsp. Calyptogena okutanii (strain HA).